A 357-amino-acid chain; its full sequence is Protein FAM118A (357 aa).

An N-acetylmethionine modification is found at M1. Residues 30 to 50 (LLLVIGTGVSAAVAPGIPALC) form a helical membrane-spanning segment. Phosphoserine is present on S311.

It belongs to the FAM118 family.

It is found in the membrane. In Homo sapiens (Human), this protein is Protein FAM118A (FAM118A).